Consider the following 568-residue polypeptide: Probable inactive poly [ADP-ribose] polymerase SRO1 (568 aa).

The span at 1-18 (MEAKIVKVSDSSYKDGLG) shows a compositional bias: basic and acidic residues. Positions 1–32 (MEAKIVKVSDSSYKDGLGKKRKHPGNYTPYDS) are disordered. The 76-residue stretch at 77-152 (RYFSYYKKTG…ETGVKTQLAW (76 aa)) folds into the WWE domain. 2 disordered regions span residues 220 to 241 (DFQA…DSCS) and 453 to 500 (ILPT…RRPR). The region spanning 245–463 (DDAVEKWDKT…LPTTQSRHES (219 aa)) is the PARP catalytic domain. Positions 497–568 (RRPRSPIMPF…TITGLQRSLG (72 aa)) constitute an RST domain.

In terms of assembly, interacts with DREB2A, DREB2B, DREB2C and NAC082. As to expression, expressed in young developing tissues, such as young leaves and flowers and root tips. In mature plants, expressed in vasculature of leaves and roots.

It localises to the nucleus matrix. Its function is as follows. Probable inactive ADP-ribosyltransferase that functions with RCD1 to regulate oxidative stress, hormonal and developmental responses. May regulate some stress-responsive genes. Seems to play a smaller developmental role than R. This chain is Probable inactive poly [ADP-ribose] polymerase SRO1 (SRO1), found in Arabidopsis thaliana (Mouse-ear cress).